The sequence spans 365 residues: Phospho-N-acetylmuramoyl-pentapeptide-transferase (365 aa).

10 helical membrane passes run 15–35, 51–71, 96–116, 121–141, 156–176, 180–200, 217–237, 238–258, 279–299, and 344–364; these read PSGTQLLGLLSVLLVGLAVLI, VPVLVSAIVAGIFGMWIVPLL, TMGGLIFLPVGLAAGVIFAGF, IAVALVTLAYGVIGWVDDWQV, LILQIAIAVVFCIWLALTAPE, ITFFAGLSLPLGVFFWALAGF, GLAGGTGAIAFLGVGALALPA, HPGLSLLCACLSGACLGFIYH, LAAAGILSGNIWGLLIISGIF, and TQIVGAFYLINLGLVLLSFIL.

Belongs to the glycosyltransferase 4 family. MraY subfamily. It depends on Mg(2+) as a cofactor.

Its subcellular location is the cell inner membrane. It catalyses the reaction UDP-N-acetyl-alpha-D-muramoyl-L-alanyl-gamma-D-glutamyl-meso-2,6-diaminopimeloyl-D-alanyl-D-alanine + di-trans,octa-cis-undecaprenyl phosphate = di-trans,octa-cis-undecaprenyl diphospho-N-acetyl-alpha-D-muramoyl-L-alanyl-D-glutamyl-meso-2,6-diaminopimeloyl-D-alanyl-D-alanine + UMP. The protein operates within cell wall biogenesis; peptidoglycan biosynthesis. In terms of biological role, catalyzes the initial step of the lipid cycle reactions in the biosynthesis of the cell wall peptidoglycan: transfers peptidoglycan precursor phospho-MurNAc-pentapeptide from UDP-MurNAc-pentapeptide onto the lipid carrier undecaprenyl phosphate, yielding undecaprenyl-pyrophosphoryl-MurNAc-pentapeptide, known as lipid I. The sequence is that of Phospho-N-acetylmuramoyl-pentapeptide-transferase from Picosynechococcus sp. (strain ATCC 27264 / PCC 7002 / PR-6) (Agmenellum quadruplicatum).